Reading from the N-terminus, the 144-residue chain is Transcription antitermination protein NusB (144 aa).

The protein belongs to the NusB family.

Involved in transcription antitermination. Required for transcription of ribosomal RNA (rRNA) genes. Binds specifically to the boxA antiterminator sequence of the ribosomal RNA (rrn) operons. The chain is Transcription antitermination protein NusB from Streptococcus agalactiae serotype Ia (strain ATCC 27591 / A909 / CDC SS700).